The following is a 242-amino-acid chain: Transcription factor Spi-C (242 aa).

Residues Leu112 to Ser195 constitute a DNA-binding region (ETS).

It belongs to the ETS family. As to quaternary structure, binds DNA as a monomer. In terms of tissue distribution, expressed in lymphoid tissues, including spleen, bone marrow and thymus. According to PubMed:19037245, highly expressed in red pulp macrophages and, at lower, levels in B-cells, but not in other cells, including, monocytes, dendritic cells and other tissue macrophages. According to PubMed:10464163 expressed in pre- and mature B-cells but not in immature B-cells; according to PubMed:10187812 not expressed in pre- but predominantly in mature B-cells and at lower levels in macrophages.

The protein resides in the nucleus. In terms of biological role, controls the development of red pulp macrophages required for red blood cells recycling and iron homeostasis. Transcription factor that binds to the PU-box, a purine-rich DNA sequence (5'-GAGGA[AT]-3') that can act as a lymphoid-specific enhancer. Regulates VCAM1 gene expression. The protein is Transcription factor Spi-C (Spic) of Mus musculus (Mouse).